Consider the following 233-residue polypeptide: Phycoerythrobilin synthase (233 aa).

It belongs to the HY2 family.

It carries out the reaction (3Z)-phycoerythrobilin + 2 oxidized 2[4Fe-4S]-[ferredoxin] = biliverdin IXalpha + 2 reduced 2[4Fe-4S]-[ferredoxin] + 4 H(+). Functionally, plays a role in phycoerythrobilin biosynthesis, the red pigment chromophore photosynthetically active biliproteins of the host cyanobacteria. Uses a four-electron reduction to carry out the reactions catalyzed by two enzymes (EC 1.3.7.2 and EC 1.3.7.3) in host. The polypeptide is Phycoerythrobilin synthase (pebS) (Prochlorococcus).